The chain runs to 1055 residues: Pre-mRNA-splicing factor ATP-dependent RNA helicase-like protein cdc28 (1055 aa).

Residues Pro67–Asn78 are compositionally biased toward basic and acidic residues. A disordered region spans residues Pro67 to Arg184. Basic residues predominate over residues Pro112–Thr121. Basic and acidic residues predominate over residues Pro122–Asp132. The segment covering Glu133–Val145 has biased composition (acidic residues). The span at Gln163–Arg184 shows a compositional bias: basic and acidic residues. The region spanning Leu428–Pro592 is the Helicase ATP-binding domain. Residue Ala441 to Thr448 coordinates ATP. The DEAH box signature appears at Asp539–His542. Residues Thr617–Gly790 form the Helicase C-terminal domain.

The protein belongs to the DEAD box helicase family. DEAH subfamily. DDX16/PRP8 sub-subfamily.

It is found in the nucleus. It carries out the reaction ATP + H2O = ADP + phosphate + H(+). Its function is as follows. Involved in pre-mRNA splicing. Is required together with ATP and at least one other factor, for the first cleavage-ligation reaction. Functions as a molecular motor in the activation of the precatalytic spliceosome for the first transesterification reaction of pre-mRNA splicing by hydrolyzing ATP to cause the activation of the spliceosome without the occurrence of splicing. This chain is Pre-mRNA-splicing factor ATP-dependent RNA helicase-like protein cdc28 (cdc28), found in Schizosaccharomyces pombe (strain 972 / ATCC 24843) (Fission yeast).